A 401-amino-acid polypeptide reads, in one-letter code: Phosphoglycerate kinase (401 aa).

Substrate-binding positions include 21–23 (DLN), arginine 37, 60–63 (HLGR), arginine 119, and arginine 152. ATP-binding positions include lysine 203, glutamate 325, and 351–354 (GGDT).

This sequence belongs to the phosphoglycerate kinase family. As to quaternary structure, monomer.

Its subcellular location is the cytoplasm. The catalysed reaction is (2R)-3-phosphoglycerate + ATP = (2R)-3-phospho-glyceroyl phosphate + ADP. It participates in carbohydrate degradation; glycolysis; pyruvate from D-glyceraldehyde 3-phosphate: step 2/5. This is Phosphoglycerate kinase from Acidithiobacillus ferrooxidans (strain ATCC 23270 / DSM 14882 / CIP 104768 / NCIMB 8455) (Ferrobacillus ferrooxidans (strain ATCC 23270)).